The sequence spans 121 residues: Large ribosomal subunit protein uL14 (121 aa).

This sequence belongs to the universal ribosomal protein uL14 family. As to quaternary structure, part of the 50S ribosomal subunit. Forms a cluster with proteins L3 and L19. In the 70S ribosome, L14 and L19 interact and together make contacts with the 16S rRNA in bridges B5 and B8.

In terms of biological role, binds to 23S rRNA. Forms part of two intersubunit bridges in the 70S ribosome. This Prochlorococcus marinus (strain MIT 9515) protein is Large ribosomal subunit protein uL14.